The sequence spans 282 residues: uncharacterized protein (282 aa).

The N-terminal stretch at 1–18 is a signal peptide; sequence MIDLLVILVSLLFGVVWY.

This sequence belongs to the IIV-6 213R family.

This is an uncharacterized protein from Aedes vexans (Inland floodwater mosquito).